A 305-amino-acid polypeptide reads, in one-letter code: Mitogen-activated protein kinase kinase 10 (305 aa).

The residue at position 34 (S34) is a Phosphoserine. The 255-residue stretch at 48–302 folds into the Protein kinase domain; the sequence is LEKLSVLGQG…VEELLRHSFV (255 aa). Residues 54–62 and K77 each bind ATP; that span reads LGQGSGGTV. Residue D165 is the Proton acceptor of the active site. T200 carries the phosphothreonine modification.

The protein belongs to the protein kinase superfamily. STE Ser/Thr protein kinase family. MAP kinase kinase subfamily. As to quaternary structure, interacts with P.syringae type III effector HopF2.

The enzyme catalyses L-seryl-[protein] + ATP = O-phospho-L-seryl-[protein] + ADP + H(+). It catalyses the reaction L-threonyl-[protein] + ATP = O-phospho-L-threonyl-[protein] + ADP + H(+). It carries out the reaction L-tyrosyl-[protein] + ATP = O-phospho-L-tyrosyl-[protein] + ADP + H(+). The polypeptide is Mitogen-activated protein kinase kinase 10 (MKK10) (Arabidopsis thaliana (Mouse-ear cress)).